A 350-amino-acid chain; its full sequence is Protein-glutamate methylesterase/protein-glutamine glutaminase 6 (350 aa).

Positions 11-126 constitute a Response regulatory domain; it reads RVLVVDDSAA…LAPVREELLE (116 aa). 4-aspartylphosphate is present on D62. A CheB-type methylesterase domain is found at 150 to 347; the sequence is ELEPARVAVV…ARLVEFARDA (198 aa). Catalysis depends on residues S162, H189, and D289.

Belongs to the CheB family. Phosphorylated by CheA. Phosphorylation of the N-terminal regulatory domain activates the methylesterase activity.

The protein localises to the cytoplasm. It carries out the reaction [protein]-L-glutamate 5-O-methyl ester + H2O = L-glutamyl-[protein] + methanol + H(+). It catalyses the reaction L-glutaminyl-[protein] + H2O = L-glutamyl-[protein] + NH4(+). Its function is as follows. Involved in chemotaxis. Part of a chemotaxis signal transduction system that modulates chemotaxis in response to various stimuli. Catalyzes the demethylation of specific methylglutamate residues introduced into the chemoreceptors (methyl-accepting chemotaxis proteins or MCP) by CheR. Also mediates the irreversible deamidation of specific glutamine residues to glutamic acid. The sequence is that of Protein-glutamate methylesterase/protein-glutamine glutaminase 6 from Anaeromyxobacter dehalogenans (strain 2CP-C).